We begin with the raw amino-acid sequence, 820 residues long: Probable protease Ga0182885_104520 (820 aa).

The protein belongs to the peptidase C25 family.

Functionally, probably a dedicated protease for substrate gasdermin bGSDM; cleaves the bGSDM precursor, releasing the pore-forming moiety, which integrates into the membrane and triggers cell death. Involved in defense against bacteriophages. Expression of bacterial gasdermin (bGSDM) and this neighboring protease is toxic in E.coli. This chain is Probable protease Ga0182885_104520, found in Desulfuromonadales bacterium.